Reading from the N-terminus, the 113-residue chain is Mediator of RNA polymerase II transcription subunit 22 (113 aa).

It belongs to the Mediator complex subunit 22 family. Component of the Mediator complex.

It is found in the nucleus. Functionally, component of the Mediator complex, a coactivator involved in the regulated transcription of nearly all RNA polymerase II-dependent genes. Mediator functions as a bridge to convey information from gene-specific regulatory proteins to the basal RNA polymerase II transcription machinery. Mediator is recruited to promoters by direct interactions with regulatory proteins and serves as a scaffold for the assembly of a functional preinitiation complex with RNA polymerase II and the general transcription factors. The polypeptide is Mediator of RNA polymerase II transcription subunit 22 (SRB6) (Candida glabrata (strain ATCC 2001 / BCRC 20586 / JCM 3761 / NBRC 0622 / NRRL Y-65 / CBS 138) (Yeast)).